The primary structure comprises 524 residues: Glucose-6-phosphate isomerase (524 aa).

The active-site Proton donor is glutamate 346. Catalysis depends on residues histidine 377 and lysine 492.

This sequence belongs to the GPI family.

The protein localises to the cytoplasm. The enzyme catalyses alpha-D-glucose 6-phosphate = beta-D-fructose 6-phosphate. It participates in carbohydrate biosynthesis; gluconeogenesis. The protein operates within carbohydrate degradation; glycolysis; D-glyceraldehyde 3-phosphate and glycerone phosphate from D-glucose: step 2/4. In terms of biological role, catalyzes the reversible isomerization of glucose-6-phosphate to fructose-6-phosphate. The sequence is that of Glucose-6-phosphate isomerase from Chlamydia muridarum (strain MoPn / Nigg).